Here is a 304-residue protein sequence, read N- to C-terminus: N-acetylmuramic acid 6-phosphate etherase (304 aa).

The region spanning 57–220 (AVKGLSAGGR…STATMVGLGK (164 aa)) is the SIS domain. Glu-85 serves as the catalytic Proton donor. Residue Glu-116 is part of the active site.

This sequence belongs to the GCKR-like family. MurNAc-6-P etherase subfamily. In terms of assembly, homodimer.

The catalysed reaction is N-acetyl-D-muramate 6-phosphate + H2O = N-acetyl-D-glucosamine 6-phosphate + (R)-lactate. It participates in amino-sugar metabolism; N-acetylmuramate degradation. Its function is as follows. Specifically catalyzes the cleavage of the D-lactyl ether substituent of MurNAc 6-phosphate, producing GlcNAc 6-phosphate and D-lactate. The sequence is that of N-acetylmuramic acid 6-phosphate etherase from Cutibacterium acnes (strain DSM 16379 / KPA171202) (Propionibacterium acnes).